The primary structure comprises 249 residues: Eukaryotic translation initiation factor 3 subunit K (249 aa).

Positions 46–222 (FDCYANLALL…VKVPTNKENE (177 aa)) constitute a PCI domain.

This sequence belongs to the eIF-3 subunit K family. As to quaternary structure, component of the eukaryotic translation initiation factor 3 (eIF-3) complex.

The protein localises to the cytoplasm. Functionally, component of the eukaryotic translation initiation factor 3 (eIF-3) complex, which is involved in protein synthesis of a specialized repertoire of mRNAs and, together with other initiation factors, stimulates binding of mRNA and methionyl-tRNAi to the 40S ribosome. The eIF-3 complex specifically targets and initiates translation of a subset of mRNAs involved in cell proliferation. The chain is Eukaryotic translation initiation factor 3 subunit K from Neosartorya fischeri (strain ATCC 1020 / DSM 3700 / CBS 544.65 / FGSC A1164 / JCM 1740 / NRRL 181 / WB 181) (Aspergillus fischerianus).